The following is a 513-amino-acid chain: Glutamyl-tRNA(Gln) amidotransferase subunit A (513 aa).

Residues Lys-85 and Ser-160 each act as charge relay system in the active site. Ser-184 functions as the Acyl-ester intermediate in the catalytic mechanism.

The protein belongs to the amidase family. GatA subfamily. In terms of assembly, heterotrimer of A, B and C subunits.

It carries out the reaction L-glutamyl-tRNA(Gln) + L-glutamine + ATP + H2O = L-glutaminyl-tRNA(Gln) + L-glutamate + ADP + phosphate + H(+). Its function is as follows. Allows the formation of correctly charged Gln-tRNA(Gln) through the transamidation of misacylated Glu-tRNA(Gln) in organisms which lack glutaminyl-tRNA synthetase. The reaction takes place in the presence of glutamine and ATP through an activated gamma-phospho-Glu-tRNA(Gln). The protein is Glutamyl-tRNA(Gln) amidotransferase subunit A of Bifidobacterium longum subsp. infantis (strain ATCC 15697 / DSM 20088 / JCM 1222 / NCTC 11817 / S12).